Reading from the N-terminus, the 299-residue chain is Oxygen-dependent coproporphyrinogen-III oxidase (299 aa).

S92 contributes to the substrate binding site. H96 and H106 together coordinate a divalent metal cation. The Proton donor role is filled by H106. 108–110 (NVR) contacts substrate. 2 residues coordinate a divalent metal cation: H145 and H175. The important for dimerization stretch occupies residues 240–275 (YVEFNLVWDRGTLFGLQTGGRTESILMSMPPLVRWE). Substrate is bound at residue 258 to 260 (GGR).

It belongs to the aerobic coproporphyrinogen-III oxidase family. In terms of assembly, homodimer. It depends on a divalent metal cation as a cofactor.

The protein localises to the cytoplasm. It carries out the reaction coproporphyrinogen III + O2 + 2 H(+) = protoporphyrinogen IX + 2 CO2 + 2 H2O. Its pathway is porphyrin-containing compound metabolism; protoporphyrin-IX biosynthesis; protoporphyrinogen-IX from coproporphyrinogen-III (O2 route): step 1/1. Its function is as follows. Involved in the heme biosynthesis. Catalyzes the aerobic oxidative decarboxylation of propionate groups of rings A and B of coproporphyrinogen-III to yield the vinyl groups in protoporphyrinogen-IX. This is Oxygen-dependent coproporphyrinogen-III oxidase from Shigella boydii serotype 18 (strain CDC 3083-94 / BS512).